The following is an 847-amino-acid chain: Putative disease resistance RPP13-like protein 2 (847 aa).

Positions 26–42 form a coiled coil; it reads GVKDDLEELKTELTCIQ. The region spanning 142–446 is the NB-ARC domain; that stretch reads STSRVREVRR…AEGFIQEDEE (305 aa). ATP is bound at residue 191–198; the sequence is GMEGLGKT. LRR repeat units lie at residues 587–610, 612–634, 703–726, 749–774, and 807–830; these read LVHL…ISNL, FLQT…NLTS, LKNL…TVRF, FPSL…KLQR, and IKRL…NLDN.

The protein belongs to the disease resistance NB-LRR family. RPP13 subfamily.

In terms of biological role, potential disease resistance protein. This chain is Putative disease resistance RPP13-like protein 2 (RPP13L2), found in Arabidopsis thaliana (Mouse-ear cress).